Reading from the N-terminus, the 260-residue chain is Translation initiation factor 2 subunit alpha (260 aa).

Residues 12–83 enclose the S1 motif domain; it reads GDLIVGTVHK…KKGHVDASLK (72 aa).

The protein belongs to the eIF-2-alpha family. As to quaternary structure, heterotrimer composed of an alpha, a beta and a gamma chain.

EIF-2 functions in the early steps of protein synthesis by forming a ternary complex with GTP and initiator tRNA. This chain is Translation initiation factor 2 subunit alpha, found in Methanosphaera stadtmanae (strain ATCC 43021 / DSM 3091 / JCM 11832 / MCB-3).